Consider the following 346-residue polypeptide: Aspartate-semialdehyde dehydrogenase (346 aa).

NADP(+)-binding positions include 13 to 16 (TGAV) and 41 to 42 (RS). A Phosphoserine modification is found at Ser98. Arg101 lines the phosphate pocket. Cys130 (acyl-thioester intermediate) is an active-site residue. The residue at position 146 (Tyr146) is a Phosphotyrosine. Gln157 lines the substrate pocket. NADP(+) is bound at residue 160 to 161 (SG). Lys221 contacts phosphate. Arg243 contributes to the substrate binding site. The active-site Proton acceptor is the His250. Asn324 is an NADP(+) binding site.

This sequence belongs to the aspartate-semialdehyde dehydrogenase family. Homodimer.

It carries out the reaction L-aspartate 4-semialdehyde + phosphate + NADP(+) = 4-phospho-L-aspartate + NADPH + H(+). The protein operates within amino-acid biosynthesis; L-lysine biosynthesis via DAP pathway; (S)-tetrahydrodipicolinate from L-aspartate: step 2/4. It functions in the pathway amino-acid biosynthesis; L-methionine biosynthesis via de novo pathway; L-homoserine from L-aspartate: step 2/3. It participates in amino-acid biosynthesis; L-threonine biosynthesis; L-threonine from L-aspartate: step 2/5. Catalyzes the NADPH-dependent formation of L-aspartate-semialdehyde (L-ASA) by the reductive dephosphorylation of L-aspartyl-4-phosphate. The chain is Aspartate-semialdehyde dehydrogenase from Bacillus subtilis (strain 168).